The primary structure comprises 498 residues: MASQGTKRSYEQMETGGERQNATEIRASVGRMVGGIGRFYIQMCTELKLGDHEGRLIQNSITIERMVLSAFDERRNKYLEEHPSAGKDPKKTGGPIYRRRDGKWMRELILYDKEEIRRIWRQANNGEDATAGLTHLMIWHSNLNDATYQRTRALVRTGMDPRMCSLMQGSTLPRRSGAAGAAVKGVGTMVMELIRMIKRGINDRNFWRGENGRRTRIAYERMCNILKGKFQTAAQRAMMDQVRESRNPGNAEIEDLIFLARSALILRGSVAHKSCLPACVYGLAVASGYDFEREGYSLVGIDPFRLLQNSQVFSLIRPNENPAHKSQLVWMACHSAAFEDLRVSSFIRGTRMVPRGKLSTRGVQIASNENMETMDSNTLELRSKYWAIRTRSGGNTNKQRASAGQISVQPTFSVQRNLPFERATIMAAFTGNTEGRTSDMRTEIIRMMESARPEDASFQGRGVFELSDEKATNPIVPSFDMSNEGSYFFGDNAEEYDN.

The short motif at 1-18 (MASQGTKRSYEQMETGGE) is the Unconventional nuclear localization signal element. The disordered stretch occupies residues 1 to 21 (MASQGTKRSYEQMETGGERQN). Positions 198 to 216 (KRGINDRNFWRGENGRRTR) match the Bipartite nuclear localization signal motif.

The protein belongs to the influenza viruses nucleoprotein family. In terms of assembly, homomultimerizes to form the nucleocapsid. May bind host exportin-1/XPO1. Binds to viral genomic RNA. Protein-RNA contacts are mediated by a combination of electrostatic interactions between positively charged residues and the phosphate backbone and planar interactions between aromatic side chains and bases. Late in virus-infected cells, may be cleaved from a 56-kDa protein to a 53-kDa protein by a cellular caspase. This cleavage might be a marker for the onset of apoptosis in infected cells or have a specific function in virus host interaction.

It is found in the virion. It localises to the host nucleus. Functionally, encapsidates the negative strand viral RNA, protecting it from nucleases. The encapsidated genomic RNA is termed the ribonucleoprotein (RNP) and serves as template for transcription and replication. The RNP needs to be localized in the host nucleus to start an infectious cycle, but is too large to diffuse through the nuclear pore complex. NP comprises at least 2 nuclear localization signals that are responsible for the active RNP import into the nucleus through cellular importin alpha/beta pathway. Later in the infection, nclear export of RNPs are mediated through viral proteins NEP interacting with M1 which binds nucleoproteins. It is possible that nucleoprotein binds directly host exportin-1/XPO1 and plays an active role in RNPs nuclear export. M1 interaction with RNP seems to hide nucleoprotein's nuclear localization signals. Soon after a virion infects a new cell, M1 dissociates from the RNP under acidification of the virion driven by M2 protein. Dissociation of M1 from RNP unmasks nucleoprotein's nuclear localization signals, targeting the RNP to the nucleus. The sequence is that of Nucleoprotein from Influenza A virus (strain A/Equine/Jillin/1/1989 H3N8).